The following is a 274-amino-acid chain: MKHFVNPCIHFIQKQLQERGFKKVVLGLSGGIDSAVVATLATLALGSENVRALLMPSLSSNEEHFNDAFNLAHNLELESKIIQLAPFQENFAKQEGMDLSGKYMEKLDMNQKMRMGNFCARIRMTMLYDCASADNALVLGTSNKSEILLGYGTIFGDLAYAINPIGGLYKTQIFAFARALNVPQEIIAKKPSADLFANQSDETDLGYNYADIDTFLEAFEKLGGVEATQNKEREHIKEKLKNAGFECNMIESLSTRVWNNTFKRTKPTILEYKV.

An ATP-binding site is contributed by 27 to 34 (GLSGGIDS). Asp-33 contacts Mg(2+). Position 121 (Arg-121) interacts with deamido-NAD(+). Thr-141 lines the ATP pocket. Position 146 (Glu-146) interacts with Mg(2+). Lys-170 and Ser-192 together coordinate ATP.

This sequence belongs to the NAD synthetase family. Homodimer.

The enzyme catalyses deamido-NAD(+) + NH4(+) + ATP = AMP + diphosphate + NAD(+) + H(+). It functions in the pathway cofactor biosynthesis; NAD(+) biosynthesis; NAD(+) from deamido-NAD(+) (ammonia route): step 1/1. Catalyzes the ATP-dependent amidation of deamido-NAD to form NAD. Uses ammonia as a nitrogen source. The protein is NH(3)-dependent NAD(+) synthetase of Helicobacter hepaticus (strain ATCC 51449 / 3B1).